The chain runs to 302 residues: Forkhead box protein R2 (302 aa).

A DNA-binding region (fork-head) is located at residues Arg-183 to Ser-285.

It is found in the nucleus. In Mus musculus (Mouse), this protein is Forkhead box protein R2 (Foxr2).